Consider the following 807-residue polypeptide: Spondin-1 (807 aa).

Residues 1–28 (MRLSPVLLRLSRGPALLALALPLAVALA) form the signal peptide. The Reelin domain maps to 29–194 (FSDETLDKVP…DSTFDGVTDK (166 aa)). 17 disulfides stabilise this stretch: cysteine 44/cysteine 128, cysteine 156/cysteine 182, cysteine 199/cysteine 336, cysteine 200/cysteine 340, cysteine 202/cysteine 415, cysteine 443/cysteine 480, cysteine 454/cysteine 489, cysteine 459/cysteine 494, cysteine 502/cysteine 538, cysteine 513/cysteine 517, cysteine 548/cysteine 554, cysteine 559/cysteine 595, cysteine 570/cysteine 574, cysteine 605/cysteine 610, cysteine 615/cysteine 650, cysteine 626/cysteine 630, and cysteine 660/cysteine 665. One can recognise a Spondin domain in the interval 195-388 (PILDCCACGT…LTSLDHPQSP (194 aa)). Asparagine 214 carries an N-linked (GlcNAc...) asparagine glycan. Positions 325, 354, and 358 each coordinate Ca(2+). 6 TSP type-1 domains span residues 442–495 (TCIY…PGCS), 501–555 (TCTM…EECS), 558–611 (SCLT…PECH), 614–666 (PCLL…PECP), 668–721 (DCEL…RKCL), and 754–806 (GCRM…NVHP). Asparagine 681 carries N-linked (GlcNAc...) asparagine glycosylation.

As to quaternary structure, binds to the central extracellular domain of APP and inhibits beta-secretase cleavage of APP.

It localises to the secreted. The protein localises to the extracellular space. The protein resides in the extracellular matrix. Functionally, cell adhesion protein that promotes the attachment of spinal cord and sensory neuron cells and the outgrowth of neurites in vitro. May contribute to the growth and guidance of axons in both the spinal cord and the PNS. Major factor for vascular smooth muscle cell. The sequence is that of Spondin-1 (SPON1) from Bos taurus (Bovine).